The primary structure comprises 769 residues: Serine/threonine-protein kinase PLK4 (769 aa).

The region spanning 14 to 267 (YEVQHLLGKG…LEAVLCHPFM (254 aa)) is the Protein kinase domain. ATP is bound by residues 20 to 28 (LGKGGFATV) and Lys-43. Catalysis depends on Asp-138, which acts as the Proton acceptor. Residues 381–498 (EDRISVPPLN…ARFVGLVKSK (118 aa)) enclose the Cryptic POLO box 1 (CPB1) domain. In terms of domain architecture, Cryptic POLO box 2 (CPB2) spans 499–602 (TPKVTYFSTL…GRRPITDVQP (104 aa)). The 80-residue stretch at 660-739 (PIKRINVPDI…IPNIQLKLKT (80 aa)) folds into the POLO box domain.

It belongs to the protein kinase superfamily. Ser/Thr protein kinase family. CDC5/Polo subfamily. Homodimer. In terms of processing, ubiquitinated by the SCF(Slimb) ubiquitin ligase complex; leading to its degradation by the proteasome during interphase and regulating centriole number and ensuring the block to centriole reduplication.

It is found in the cytoplasm. The protein localises to the cytoskeleton. It localises to the microtubule organizing center. Its subcellular location is the centrosome. The protein resides in the centriole. The enzyme catalyses L-seryl-[protein] + ATP = O-phospho-L-seryl-[protein] + ADP + H(+). The catalysed reaction is L-threonyl-[protein] + ATP = O-phospho-L-threonyl-[protein] + ADP + H(+). Its function is as follows. Serine/threonine-protein kinase that plays a central role in centriole duplication. Able to trigger procentriole formation on the surface of the mother centriole cylinder, using mother centriole as a platform, leading to the recruitment of centriole biogenesis proteins such as sas-6. When overexpressed, it is able to induce centrosome amplification through the simultaneous generation of multiple procentrioles adjoining each parental centriole during S phase. Centrosome amplification following overexpression can initiate tumorigenesis, highlighting the importance of centrosome regulation in cancers. The sequence is that of Serine/threonine-protein kinase PLK4 (SAK) from Drosophila simulans (Fruit fly).